The sequence spans 185 residues: Ribosome-recycling factor (185 aa).

The protein belongs to the RRF family.

The protein localises to the cytoplasm. In terms of biological role, responsible for the release of ribosomes from messenger RNA at the termination of protein biosynthesis. May increase the efficiency of translation by recycling ribosomes from one round of translation to another. This Helicobacter hepaticus (strain ATCC 51449 / 3B1) protein is Ribosome-recycling factor.